Here is a 419-residue protein sequence, read N- to C-terminus: Histidine--tRNA ligase (419 aa).

It belongs to the class-II aminoacyl-tRNA synthetase family. As to quaternary structure, homodimer.

It is found in the cytoplasm. It carries out the reaction tRNA(His) + L-histidine + ATP = L-histidyl-tRNA(His) + AMP + diphosphate + H(+). The sequence is that of Histidine--tRNA ligase from Synechococcus sp. (strain JA-3-3Ab) (Cyanobacteria bacterium Yellowstone A-Prime).